We begin with the raw amino-acid sequence, 208 residues long: MSEDRPTLLVGLGNPGQKYAETRHNIGFMLIDRLAQDWGVKLSEDRKFQGEYGETAVPGLGKIRLLKPTTFMNQSGRSLRAVLDWYKLTPQQILVIYDDMDLPLGRLRLRQSGSAGTHNGMKSIISHLSSKDFPRLRLGISLPRSQSNDRHDATVSHVLGKFAVSEQSLLKQVLDLAQEATETALRSGVETAMNRYNARSLEAPAPVA.

Residue Tyr-19 participates in tRNA binding. Residue His-24 is the Proton acceptor of the active site. Phe-71, Asn-73, and Asn-119 together coordinate tRNA.

Belongs to the PTH family. In terms of assembly, monomer.

It localises to the cytoplasm. It catalyses the reaction an N-acyl-L-alpha-aminoacyl-tRNA + H2O = an N-acyl-L-amino acid + a tRNA + H(+). In terms of biological role, hydrolyzes ribosome-free peptidyl-tRNAs (with 1 or more amino acids incorporated), which drop off the ribosome during protein synthesis, or as a result of ribosome stalling. Its function is as follows. Catalyzes the release of premature peptidyl moieties from peptidyl-tRNA molecules trapped in stalled 50S ribosomal subunits, and thus maintains levels of free tRNAs and 50S ribosomes. The polypeptide is Peptidyl-tRNA hydrolase (Synechococcus elongatus (strain ATCC 33912 / PCC 7942 / FACHB-805) (Anacystis nidulans R2)).